A 1077-amino-acid chain; its full sequence is Deoxyribonuclease CdiA (1077 aa).

Residues 67-384 (IGTSRQKTTD…DRDNYDAKQS (318 aa)) form an FHA-2 region. Positions 531 to 546 (QQNVDDLSRDTGNANG) are enriched in polar residues. The interval 531–555 (QQNVDDLSRDTGNANGSIGPIFDKE) is disordered. A VENN CT cleavage motif motif is present at residues 781 to 784 (VENN). The DNase activity stretch occupies residues 954-1077 (MPWEDYVGKT…GVKVTVTQVK (124 aa)).

As to quaternary structure, interacts with cognate immunity protein CdiI-YPIII, which blocks its toxic DNase activity. Zn(2+) serves as cofactor.

The protein resides in the target cell. It localises to the target cell cytoplasm. Toxic component of a toxin-immunity protein module, which functions as a cellular contact-dependent growth inhibition (CDI) system. CDI modules allow bacteria to communicate with and inhibit the growth of closely related neighboring bacteria in a contact-dependent fashion. The C-terminal 123 residues (954-1077) has DNase activity in the presence of Zn(2+), converting supercoiled DNA into open-circular form. Toxic activity is neutralized by coexpression of the cognate immunity protein CdiI-YPIII, but not by non-cognate immunity proteins from other toxin-immunity modules. Expression of the DNase domain as a chimera allows bacteria to attack other non-immune bacteria which become filamentous and have lost DNA staining. In terms of biological role, the CdiA protein is thought to be exported from the cell through the central lumen of CdiB, the other half of its two-partner system (TPS). The TPS domain probably remains associated with CdiB while the FHA-1 domain forms an extended filament with the receptor-binding domain (RBD) at its extremity; in the secretion arrested state the C-terminus of the RBD and YP domains form a hairpin-like structure as the FHA-2, PT and CT domains are periplasmic. The YP domain is probably responsible for this arrest at the point where it re-enters the host cell periplasm. Upon binding to a target cell outer membrane receptor a signal is transmitted to activate secretion. The filament elongates slightly, the rest of CdiA is secreted and the FHA-2 domain becomes stably associated with the target cell's outer membrane where it facilitates entry of the toxic CT domain into the target cell periplasm. From there the toxic CT domain is cleaved and gains access to the target cell cytoplasm via an inner membrane protein. The protein is Deoxyribonuclease CdiA of Yersinia pseudotuberculosis serotype O:3 (strain YPIII).